The following is a 149-amino-acid chain: NPC intracellular cholesterol transporter 2 (149 aa).

Positions 1–19 are cleaved as a signal peptide; that stretch reads MRFLTVAFLFLALSASALA. 3 cysteine pairs are disulfide-bonded: Cys27-Cys140, Cys42-Cys47, and Cys93-Cys99. N-linked (GlcNAc...) asparagine glycosylation occurs at Asn58. Lys116 is modified (N6-acetyllysine).

Belongs to the NPC2 family. As to quaternary structure, interacts with NPC1 (via the second lumenal domain) in a cholestrol-dependent manner. Interacts with NUS1/NgBR, the interaction stabilizes NCP2 and regulates cholesterol trafficking. Interacts with DHDDS. Interacts with NEDD4L (via C2 domain). Interacts with NPC1L1. In terms of tissue distribution, expressed in kidney, spleen, liver and mammary gland, but not in testis.

It is found in the secreted. It localises to the endoplasmic reticulum. The protein localises to the lysosome. The catalysed reaction is cholesterol(in) = cholesterol(out). Functionally, intracellular cholesterol transporter which acts in concert with NPC1 and plays an important role in the egress of cholesterol from the lysosomal compartment. Unesterified cholesterol that has been released from LDLs in the lumen of the late endosomes/lysosomes is transferred by NPC2 to the cholesterol-binding pocket in the N-terminal domain of NPC1. May bind and mobilize cholesterol that is associated with membranes. NPC2 binds cholesterol with a 1:1 stoichiometry. Can bind a variety of sterols, including lathosterol, desmosterol and the plant sterols stigmasterol and beta-sitosterol. The secreted form of NCP2 regulates biliary cholesterol secretion via stimulation of ABCG5/ABCG8-mediated cholesterol transport. The chain is NPC intracellular cholesterol transporter 2 from Bos taurus (Bovine).